A 277-amino-acid polypeptide reads, in one-letter code: Large ribosomal subunit protein uL2c (277 aa).

The disordered stretch occupies residues 228-254 (VDHPHGGGEGRCPVGHAQPRTPWGKPA).

It belongs to the universal ribosomal protein uL2 family. In terms of assembly, part of the 50S ribosomal subunit.

It is found in the plastid. The protein resides in the chloroplast. This is Large ribosomal subunit protein uL2c (rpl2) from Ostreococcus tauri.